The primary structure comprises 160 residues: MTKKKAKVASNTIALNKRARHDYFIEDEIEAGLSLQGWEVKSMRAGKASIGDSYIIFKHGEAYLFGATIQPLSVASTHIVCDPTRTRKLLLNQKELASLFGKANRDGFTIVALSLYWKGPWAKVKIGLAKGKKLHDKREDIKDREWKVTKDRIMKNAQRG.

The protein belongs to the SmpB family.

Its subcellular location is the cytoplasm. Its function is as follows. Required for rescue of stalled ribosomes mediated by trans-translation. Binds to transfer-messenger RNA (tmRNA), required for stable association of tmRNA with ribosomes. tmRNA and SmpB together mimic tRNA shape, replacing the anticodon stem-loop with SmpB. tmRNA is encoded by the ssrA gene; the 2 termini fold to resemble tRNA(Ala) and it encodes a 'tag peptide', a short internal open reading frame. During trans-translation Ala-aminoacylated tmRNA acts like a tRNA, entering the A-site of stalled ribosomes, displacing the stalled mRNA. The ribosome then switches to translate the ORF on the tmRNA; the nascent peptide is terminated with the 'tag peptide' encoded by the tmRNA and targeted for degradation. The ribosome is freed to recommence translation, which seems to be the essential function of trans-translation. This chain is SsrA-binding protein, found in Histophilus somni (strain 129Pt) (Haemophilus somnus).